The following is a 36-amino-acid chain: DNA binding protein ORF8 (36 aa).

Belongs to the microviridae J protein family.

Its subcellular location is the virion. The protein resides in the host cytoplasm. Functionally, mediates ssDNA packaging into virion, it locates to the internal surface of the capsid. Additionally, plays a role in viral attachment to the host cell. In Chlamydia phage 1 (Bacteriophage Chp1), this protein is DNA binding protein ORF8.